We begin with the raw amino-acid sequence, 1048 residues long: NACHT, LRR and PYD domains-containing protein 8 (1048 aa).

The tract at residues 1 to 23 is disordered; the sequence is MSDVNPPSDTPIPFSSSSTHSSH. A compositionally biased stretch (low complexity) spans 11–23; it reads PIPFSSSSTHSSH. The Pyrin domain maps to 33 to 131; it reads PGSPCENGVM…NAILPTLEPE (99 aa). Positions 204 to 527 constitute an NACHT domain; it reads KTVAIQGAPG…FYVLCFPQRL (324 aa). ATP is bound at residue 210 to 217; sequence GAPGIGKT. LRR repeat units lie at residues 815–838, 839–861, 866–890, 923–950, and 980–1007; these read NGHL…YLSV, AQLE…SLAS, SKML…IWNA, NKTL…ALKN, and NQHL…AFSS. The segment at 1029–1048 is disordered; the sequence is PTPHPPDFTGKSDCLSQINP.

It belongs to the NLRP family.

The protein resides in the cytoplasm. Involved in inflammation. This chain is NACHT, LRR and PYD domains-containing protein 8 (NLRP8), found in Homo sapiens (Human).